Here is a 427-residue protein sequence, read N- to C-terminus: MDGDEASLVANFCAITNSTPEKAQEYLSVADGDLSTAITLFFESGGVTDVQSSYIEAPSQTEPVEEIRAPIAPTREVLVDPLADMSAGTSIMGNNFGFGGFPRMNRRQRRRMGIFDQSPSQIPFPSSNTEDSSEESDSSSRASRLAKLFRPPYDIISNLSLDEARIEASSQKRWILVNLQTSTSFECQVLNRDLWKDESVKEVIRAHFLFLQLLDDEEPGMEFKRFYPVRSTPHIAILDPRTGERVKEWSKSFTPADFVIALNDFLEGCTLDETSGRKNPLGAKSQKPVEAMSEDEQMHKAIAASLGNGNSTTESQGESSSQQAESHGVADDTVHKIDSAECDAEEPSPGPNVTRIQIRMPNGARFIRRFSLTDPVSKVYAYVKGVAEGADKQPFSLTFQRKSLWTSLDSTIKEAGIQNTALQFEFQ.

Disordered regions lie at residues phenylalanine 115–serine 143 and glutamate 273–aspartate 331. Residues serine 311–serine 326 show a composition bias toward low complexity. The UBX domain maps to proline 349–glutamate 425. Serine 371 carries the phosphoserine modification.

Interacts with cdc48.

Functionally, involved in CDC48-dependent protein degradation through the ubiquitin/proteasome pathway. The sequence is that of UBX domain-containing protein 2 (ubx2) from Schizosaccharomyces pombe (strain 972 / ATCC 24843) (Fission yeast).